The sequence spans 482 residues: Alpha-ketoglutarate semialdehyde dehydrogenase (482 aa).

The segment at 1 to 28 is disordered; sequence MTDPSKNYVNGEWVTSETGETTEVTNPA. A compositionally biased stretch (low complexity) spans 11–25; it reads GEWVTSETGETTEVT. Cys284 is a catalytic residue.

It belongs to the aldehyde dehydrogenase family. Homotetramer.

It catalyses the reaction 2,5-dioxopentanoate + NADP(+) + H2O = 2-oxoglutarate + NADPH + 2 H(+). It functions in the pathway carbohydrate metabolism; D-xylose degradation. Functionally, alpha-ketoglutarate semialdehyde dehydrogenase involved in the degradation of D-xylose, a major component of hemicelluloses such as xylan. Catalyzes the fifth reaction in the xylose utilization pathway through dehydratation of alpha-ketoglutarate semialdehyde (2,5-dioxopentanoate) into alpha-ketoglutarate. The chain is Alpha-ketoglutarate semialdehyde dehydrogenase from Haloferax volcanii (strain ATCC 29605 / DSM 3757 / JCM 8879 / NBRC 14742 / NCIMB 2012 / VKM B-1768 / DS2) (Halobacterium volcanii).